The following is a 458-amino-acid chain: uncharacterized protein (458 aa).

Disordered stretches follow at residues 339-397 (GTGY…ARIL) and 434-458 (YNSE…EDDC). Acidic residues-rich tracts occupy residues 344-390 (SDSD…EEEP) and 436-458 (SEDE…EDDC).

This is an uncharacterized protein from Invertebrate iridescent virus 3 (IIV-3).